Consider the following 270-residue polypeptide: Molybdenum-pterin-binding protein MopB (270 aa).

Mop domains lie at 131–197 and 203–269; these read RTSA…LLAG and RLSV…ILAL.

This sequence belongs to the ModE family.

The chain is Molybdenum-pterin-binding protein MopB (mopB) from Rhodobacter capsulatus (Rhodopseudomonas capsulata).